Reading from the N-terminus, the 122-residue chain is MIQMTSVLDVADNSGAKKVFCIKVLGGSKRKYASIGDVIVVSVREALPNSKVKKGDVAKAVIVRTKREVGRPDGSYIKFDGNSAVLINKDMEPIGTRIFGPVARELRARKFMKIISLAPEVL.

The protein belongs to the universal ribosomal protein uL14 family. In terms of assembly, part of the 50S ribosomal subunit. Forms a cluster with proteins L3 and L19. In the 70S ribosome, L14 and L19 interact and together make contacts with the 16S rRNA in bridges B5 and B8.

Binds to 23S rRNA. Forms part of two intersubunit bridges in the 70S ribosome. The chain is Large ribosomal subunit protein uL14 from Myxococcus xanthus (strain DK1622).